The sequence spans 332 residues: Ketol-acid reductoisomerase (NADP(+)) (332 aa).

One can recognise a KARI N-terminal Rossmann domain in the interval 1-182 (MAVIYYDKDC…GSNRAGILET (182 aa)). NADP(+) contacts are provided by residues 25 to 28 (YGAQ) and 83 to 86 (DTSQ). Residue His-108 is part of the active site. Gly-134 provides a ligand contact to NADP(+). Residues 183 to 328 (TFAEETETDL…AELRSMMSWL (146 aa)) enclose the KARI C-terminal knotted domain. Mg(2+)-binding residues include Asp-191, Glu-195, Glu-227, and Glu-231. Residue Ser-252 coordinates substrate.

This sequence belongs to the ketol-acid reductoisomerase family. The cofactor is Mg(2+).

The catalysed reaction is (2R)-2,3-dihydroxy-3-methylbutanoate + NADP(+) = (2S)-2-acetolactate + NADPH + H(+). It carries out the reaction (2R,3R)-2,3-dihydroxy-3-methylpentanoate + NADP(+) = (S)-2-ethyl-2-hydroxy-3-oxobutanoate + NADPH + H(+). Its pathway is amino-acid biosynthesis; L-isoleucine biosynthesis; L-isoleucine from 2-oxobutanoate: step 2/4. It participates in amino-acid biosynthesis; L-valine biosynthesis; L-valine from pyruvate: step 2/4. In terms of biological role, involved in the biosynthesis of branched-chain amino acids (BCAA). Catalyzes an alkyl-migration followed by a ketol-acid reduction of (S)-2-acetolactate (S2AL) to yield (R)-2,3-dihydroxy-isovalerate. In the isomerase reaction, S2AL is rearranged via a Mg-dependent methyl migration to produce 3-hydroxy-3-methyl-2-ketobutyrate (HMKB). In the reductase reaction, this 2-ketoacid undergoes a metal-dependent reduction by NADPH to yield (R)-2,3-dihydroxy-isovalerate. In Dehalococcoides mccartyi (strain ATCC BAA-2100 / JCM 16839 / KCTC 5957 / BAV1), this protein is Ketol-acid reductoisomerase (NADP(+)).